A 123-amino-acid chain; its full sequence is Alpha-lactalbumin A (123 aa).

Residues Lys-1–Leu-123 form the C-type lysozyme domain. 4 disulfide bridges follow: Cys-6–Cys-120, Cys-28–Cys-111, Cys-61–Cys-77, and Cys-73–Cys-91. Ca(2+) contacts are provided by Lys-79, Asp-82, Asp-84, Asp-87, and Asp-88.

It belongs to the glycosyl hydrolase 22 family. In terms of assembly, lactose synthase (LS) is a heterodimer of a catalytic component, beta1,4-galactosyltransferase (beta4Gal-T1) and a regulatory component, alpha-lactalbumin (LA). Mammary gland specific. Secreted in milk.

Its subcellular location is the secreted. In terms of biological role, regulatory subunit of lactose synthase, changes the substrate specificity of galactosyltransferase in the mammary gland making glucose a good acceptor substrate for this enzyme. This enables LS to synthesize lactose, the major carbohydrate component of milk. In other tissues, galactosyltransferase transfers galactose onto the N-acetylglucosamine of the oligosaccharide chains in glycoproteins. The polypeptide is Alpha-lactalbumin A (Equus caballus (Horse)).